Reading from the N-terminus, the 216-residue chain is MDLYERWKRTVEMLEREGIIRSLEVKEAFLKYPRYMFVEDRYKSYAHIDEPLPIPAGQTVSAPHMVAIMLEIAKLKEGMNVLEVGTGSGWNAALISYIVKTDVYSIERIPELVEFAKRNLERAGVKNVHVILGDGSKGFPPKAPYDVIIVTAGAPKVPEPLVEQLKPGGRLIIPVGSYHLWQELLEVVKKKSGEIKVRNHGGVAFVPLIGEYGWRE.

The active site involves S61.

Belongs to the methyltransferase superfamily. L-isoaspartyl/D-aspartyl protein methyltransferase family.

The protein localises to the cytoplasm. It carries out the reaction [protein]-L-isoaspartate + S-adenosyl-L-methionine = [protein]-L-isoaspartate alpha-methyl ester + S-adenosyl-L-homocysteine. Catalyzes the methyl esterification of L-isoaspartyl residues in peptides and proteins that result from spontaneous decomposition of normal L-aspartyl and L-asparaginyl residues. It plays a role in the repair and/or degradation of damaged proteins. The polypeptide is Protein-L-isoaspartate O-methyltransferase (pcm) (Pyrococcus abyssi (strain GE5 / Orsay)).